The chain runs to 279 residues: Zinc finger AN1 and C2H2 domain-containing stress-associated protein 11 (279 aa).

2 AN1-type zinc fingers span residues 7–55 and 95–145; these read PDLG…REDV and ATKK…KLPF. Zn(2+)-binding residues include Cys13, Cys18, Cys28, Cys31, Cys36, His39, His45, Cys47, Cys101, Cys106, Cys118, Cys121, Cys126, His129, His135, and Cys137. The segment at 152–178 is disordered; sequence STTRKEAKTTRPNKAHPSTSSSSSSSR. A compositionally biased stretch (low complexity) spans 169–178; the sequence is STSSSSSSSR. 2 C2H2-type zinc fingers span residues 213 to 236 and 250 to 273; these read EVCP…EKTH and DVCP…ERDH.

Functionally, may be involved in environmental stress response. The sequence is that of Zinc finger AN1 and C2H2 domain-containing stress-associated protein 11 (SAP11) from Arabidopsis thaliana (Mouse-ear cress).